The sequence spans 204 residues: Inositol diphosphatase DSP5 (204 aa).

Positions 19 to 168 (NFSMVEDEIY…FDVLRLKQCL (150 aa)) constitute a Tyrosine-protein phosphatase domain. Positions 75–87 (FGIEGKTDPPTPM) are WPD loop important for active site topology. The Phosphocysteine intermediate role is filled by Cys111.

This sequence belongs to the protein-tyrosine phosphatase family. Atypical dual-specificity phosphatase Siw14-like subfamily. In terms of tissue distribution, highly expressed in flowers. Expressed at low levels in roots, leaves, stems and siliques.

The enzyme catalyses 5-diphospho-1D-myo-inositol 1,2,3,4,6-pentakisphosphate + H2O = 1D-myo-inositol hexakisphosphate + phosphate + H(+). It carries out the reaction 1,5-bis(diphospho)-1D-myo-inositol 2,3,4,6-tetrakisphosphate + H2O = 1-diphospho-1D-myo-inositol 2,3,4,5,6-pentakisphosphate + phosphate + 2 H(+). The catalysed reaction is 3,5-bis(diphospho)-1D-myo-inositol 1,2,4,6-tetrakisphosphate + H2O = 3-diphospho-1D-myo-inositol 1,2,4,5,6-pentakisphosphate + phosphate + 2 H(+). It catalyses the reaction 6-diphospho-1D-myo-inositol pentakisphosphate + H2O = 1D-myo-inositol hexakisphosphate + phosphate + H(+). Functionally, cleaves the beta-phosphate at the 5-position of soluble inositol pyrophosphates. Has highest activity on 5-diphosphoinositol 1,2,3,4,6-pentakisphosphate (5-InsP(7)). Possesses low phosphotyrosine phosphatase activity in vitro. Dephosphorylates the phosphoinositides PI(3,5)P2. Hydrolyzes O-methylfluorescein phosphate in vitro. The polypeptide is Inositol diphosphatase DSP5 (Arabidopsis thaliana (Mouse-ear cress)).